Here is a 1142-residue protein sequence, read N- to C-terminus: Desmoglein-2.1 (1142 aa).

An N-terminal signal peptide occupies residues 1-18 (MARRISPVVAFLLCFGLS). A propeptide spanning residues 19–38 (HFFEAEARLQHSVALHRQKR) is cleaved from the precursor. Residues 39-643 (EWIVPPQILE…AKKGSRLGPA (605 aa)) lie on the Extracellular side of the membrane. Cadherin domains are found at residues 64 to 148 (SDKE…APVF), 156 to 258 (VDEL…VPTL), 259 to 416 (GGPY…GPKF), and 417 to 527 (FPGT…CPTL). N-linked (GlcNAc...) asparagine glycosylation is present at Asn-115. The interval 369–389 (SGAAGGAGAMGGASGSGGGTG) is disordered. N-linked (GlcNAc...) asparagine glycosylation is found at Asn-490 and Asn-576. A helical transmembrane segment spans residues 644–664 (GIGLLLLALLALLLIPLLLLL). Residues 665–1142 (CTCGMTGAFT…RKVVTTQSVK (478 aa)) lie on the Cytoplasmic side of the membrane. 4 Desmoglein repeat repeats span residues 948–974 (VEQQ…NSGP), 975–998 (VAEG…ERMV), 999–1039 (LVFR…VLQG), and 1040–1071 (TIQR…NGIS).

The protein localises to the cell junction. The protein resides in the desmosome. Its subcellular location is the cell membrane. It localises to the cytoplasm. Functionally, a component of desmosome cell-cell junctions which are required for positive regulation of cellular adhesion. Involved in the interaction of plaque proteins and intermediate filaments mediating cell-cell adhesion. Required for embryogenesis, specifically for progression of epiboly and normal convergence-extension movements during gastrulation. This is Desmoglein-2.1 from Danio rerio (Zebrafish).